The primary structure comprises 1032 residues: UPF0182 protein sll1060 (1032 aa).

9 consecutive transmembrane segments (helical) span residues 27 to 49 (WVKGAIVLAIALVGLEVIARIYV), 69 to 87 (WQGSIALITGFISWGFIVF), 144 to 166 (VLLPLIIVLQLILISLVMYYVFI), 197 to 219 (FSGMGSQLGVTALAGMLALIGVL), 226 to 248 (PGLVFILSAVWGLLLSGNWFRLL), 283 to 300 (WWRGLFLFSLLGVTLIIL), 321 to 339 (HISALGAAVALTLGVEHWL), 364 to 386 (LPVETGLAIFSMAIAIWLGWLSV), and 406 to 428 (IIGLWLPVAVYLLILLLQNLGGW).

This sequence belongs to the UPF0182 family.

Its subcellular location is the cell membrane. The sequence is that of UPF0182 protein sll1060 from Synechocystis sp. (strain ATCC 27184 / PCC 6803 / Kazusa).